A 129-amino-acid polypeptide reads, in one-letter code: Small ribosomal subunit protein uS13 (129 aa).

The interval 96-129 (GLPVRGQRTSTNARTRKGPRKTVGVSKAAAAAKA) is disordered.

Belongs to the universal ribosomal protein uS13 family. Part of the 30S ribosomal subunit. Forms a loose heterodimer with protein S19. Forms two bridges to the 50S subunit in the 70S ribosome.

In terms of biological role, located at the top of the head of the 30S subunit, it contacts several helices of the 16S rRNA. In the 70S ribosome it contacts the 23S rRNA (bridge B1a) and protein L5 of the 50S subunit (bridge B1b), connecting the 2 subunits; these bridges are implicated in subunit movement. Contacts the tRNAs in the A and P-sites. The chain is Small ribosomal subunit protein uS13 from Opitutus terrae (strain DSM 11246 / JCM 15787 / PB90-1).